A 226-amino-acid polypeptide reads, in one-letter code: Ribonuclease 3 (226 aa).

In terms of domain architecture, RNase III spans 7–129 (LPRLCRTLGY…IIGAIYLDSD (123 aa)). Residue Glu42 coordinates Mg(2+). Asp46 is a catalytic residue. The Mg(2+) site is built by Asp115 and Glu118. Glu118 is an active-site residue. Positions 156–226 (DAKTLLQEYL…AAQVLELLKK (71 aa)) constitute a DRBM domain.

Belongs to the ribonuclease III family. As to quaternary structure, homodimer. Mg(2+) serves as cofactor.

The protein localises to the cytoplasm. It carries out the reaction Endonucleolytic cleavage to 5'-phosphomonoester.. Its function is as follows. Digests double-stranded RNA. Involved in the processing of primary rRNA transcript to yield the immediate precursors to the large and small rRNAs (23S and 16S). Processes some mRNAs, and tRNAs when they are encoded in the rRNA operon. Processes pre-crRNA and tracrRNA of type II CRISPR loci if present in the organism. In Shewanella sp. (strain W3-18-1), this protein is Ribonuclease 3.